The following is a 569-amino-acid chain: Dihydroxy-acid dehydratase (569 aa).

Residue Asp-80 coordinates Mg(2+). Position 121 (Cys-121) interacts with [2Fe-2S] cluster. Mg(2+) contacts are provided by Asp-122 and Lys-123. The residue at position 123 (Lys-123) is an N6-carboxylysine. A [2Fe-2S] cluster-binding site is contributed by Cys-194. Glu-446 contacts Mg(2+). Catalysis depends on Ser-472, which acts as the Proton acceptor.

It belongs to the IlvD/Edd family. In terms of assembly, homodimer. [2Fe-2S] cluster is required as a cofactor. It depends on Mg(2+) as a cofactor.

The catalysed reaction is (2R)-2,3-dihydroxy-3-methylbutanoate = 3-methyl-2-oxobutanoate + H2O. It catalyses the reaction (2R,3R)-2,3-dihydroxy-3-methylpentanoate = (S)-3-methyl-2-oxopentanoate + H2O. It functions in the pathway amino-acid biosynthesis; L-isoleucine biosynthesis; L-isoleucine from 2-oxobutanoate: step 3/4. Its pathway is amino-acid biosynthesis; L-valine biosynthesis; L-valine from pyruvate: step 3/4. In terms of biological role, functions in the biosynthesis of branched-chain amino acids. Catalyzes the dehydration of (2R,3R)-2,3-dihydroxy-3-methylpentanoate (2,3-dihydroxy-3-methylvalerate) into 2-oxo-3-methylpentanoate (2-oxo-3-methylvalerate) and of (2R)-2,3-dihydroxy-3-methylbutanoate (2,3-dihydroxyisovalerate) into 2-oxo-3-methylbutanoate (2-oxoisovalerate), the penultimate precursor to L-isoleucine and L-valine, respectively. In Desulforudis audaxviator (strain MP104C), this protein is Dihydroxy-acid dehydratase.